Reading from the N-terminus, the 243-residue chain is Phosphoribosyl isomerase A (243 aa).

Asp9 serves as the catalytic Proton acceptor. Asp128 functions as the Proton donor in the catalytic mechanism.

It belongs to the HisA/HisF family.

It is found in the cytoplasm. It catalyses the reaction 1-(5-phospho-beta-D-ribosyl)-5-[(5-phospho-beta-D-ribosylamino)methylideneamino]imidazole-4-carboxamide = 5-[(5-phospho-1-deoxy-D-ribulos-1-ylimino)methylamino]-1-(5-phospho-beta-D-ribosyl)imidazole-4-carboxamide. The enzyme catalyses N-(5-phospho-beta-D-ribosyl)anthranilate = 1-(2-carboxyphenylamino)-1-deoxy-D-ribulose 5-phosphate. Its pathway is amino-acid biosynthesis; L-histidine biosynthesis; L-histidine from 5-phospho-alpha-D-ribose 1-diphosphate: step 4/9. It functions in the pathway amino-acid biosynthesis; L-tryptophan biosynthesis; L-tryptophan from chorismate: step 3/5. In terms of biological role, involved in both the histidine and tryptophan biosynthetic pathways. This Mycolicibacterium paratuberculosis (strain ATCC BAA-968 / K-10) (Mycobacterium paratuberculosis) protein is Phosphoribosyl isomerase A.